Here is a 320-residue protein sequence, read N- to C-terminus: Ferrochelatase (320 aa).

Fe cation contacts are provided by H194 and E275.

Belongs to the ferrochelatase family. As to quaternary structure, monomer.

It localises to the cytoplasm. It catalyses the reaction heme b + 2 H(+) = protoporphyrin IX + Fe(2+). It functions in the pathway porphyrin-containing compound metabolism; protoheme biosynthesis; protoheme from protoporphyrin-IX: step 1/1. Its function is as follows. Catalyzes the ferrous insertion into protoporphyrin IX. The polypeptide is Ferrochelatase (Salmonella dublin (strain CT_02021853)).